A 142-amino-acid chain; its full sequence is Large ribosomal subunit protein uL11 (142 aa).

The protein belongs to the universal ribosomal protein uL11 family. In terms of assembly, part of the ribosomal stalk of the 50S ribosomal subunit. Interacts with L10 and the large rRNA to form the base of the stalk. L10 forms an elongated spine to which L12 dimers bind in a sequential fashion forming a multimeric L10(L12)X complex. In terms of processing, one or more lysine residues are methylated.

Its function is as follows. Forms part of the ribosomal stalk which helps the ribosome interact with GTP-bound translation factors. In Bartonella henselae (strain ATCC 49882 / DSM 28221 / CCUG 30454 / Houston 1) (Rochalimaea henselae), this protein is Large ribosomal subunit protein uL11.